Reading from the N-terminus, the 94-residue chain is Integration host factor subunit beta (94 aa).

Belongs to the bacterial histone-like protein family. As to quaternary structure, heterodimer of an alpha and a beta chain.

This protein is one of the two subunits of integration host factor, a specific DNA-binding protein that functions in genetic recombination as well as in transcriptional and translational control. The protein is Integration host factor subunit beta of Escherichia fergusonii (strain ATCC 35469 / DSM 13698 / CCUG 18766 / IAM 14443 / JCM 21226 / LMG 7866 / NBRC 102419 / NCTC 12128 / CDC 0568-73).